The following is a 198-amino-acid chain: MVNYPHKLSSQKRQPSLSQPKNFANRGMSFEKMINATNDYYLSQGLAVIHKKPTPIQIVRVDYPQRSRAKIVEAYFRQASTTDYSGVYNGYYIDFEAKETKQKRAIPMKNFHPHQIQHMEQVLAQQGICFVLLHFSSQQETYLLPAFDLIRFYHQDKGQKSMPLGYIREYGYEIKAGAFPQIPYLNVIKEHLLGGKTR.

Positions 1–21 (MVNYPHKLSSQKRQPSLSQPK) are disordered. A compositionally biased stretch (polar residues) spans 11–21 (QKRQPSLSQPK). Mg(2+)-binding residues include threonine 81, aspartate 83, glutamate 96, and glutamine 115.

Belongs to the RecU family. Requires Mg(2+) as cofactor.

It localises to the cytoplasm. The catalysed reaction is Endonucleolytic cleavage at a junction such as a reciprocal single-stranded crossover between two homologous DNA duplexes (Holliday junction).. In terms of biological role, endonuclease that resolves Holliday junction intermediates in genetic recombination. Cleaves mobile four-strand junctions by introducing symmetrical nicks in paired strands. Promotes annealing of linear ssDNA with homologous dsDNA. Required for DNA repair, homologous recombination and chromosome segregation. The chain is Holliday junction resolvase RecU from Streptococcus pneumoniae (strain ATCC 700669 / Spain 23F-1).